A 1011-amino-acid polypeptide reads, in one-letter code: MAMQREAGVQDFVLLDQVSMEKFMDNLRKRFQNGSIYTYIGEVCVSMNPYRQMNIYGPETIRKYKGRELFENAPHLFAIADSAYRVLKQRQQDTCILISGESGAGKTEASKIIMKYIAAVTNAQGQNEIERVKNVLIQSNAILETFGNAKTNRNDNSSRFGKYMDIEFDYKADPVGGIITNYLLEKSRVVQQQPGERNFHSFYQLLRGANDNELRQYELQKETGKYHYLNQGSMDILTEKSDYKGTCNAFKTLGFSTDEVQTIWRTIAAVLHLGNVEFQTIEDELVISNKQHLKSTAKLLQVTETELSTALTKRVIAAGGNVMQKDHNATQAEYGKDALAKAIYDRLFTWIISRINRAILFRGSKTQARFNSVIGVLDIYGFEIFDSNSFEQFCINYCNEKLQQLFIELVLKQEQEEYQREGIEWTNIEYFNNKIICDLVEQPHKGIIAIMDEACLSVGKVTDDTLLGAMDKNLSKHPHYTSRQLKPTDKELKHREDFRITHYAGDVIYNINGFIEKNKDTLYQDFKRLLHNSKDANLSEMWPEGAQDIKKTTKRPLTAGTLFQRSMADLVVTLLKKEPFYVRCIKPNDLKSSTVFDEERVEHQVRYLGLLENLRVRRAGFVHRQRYDKFLLRYKMISQYTWPNFRAGSDRDGVRVLIEEKKFAQDVKYGHTKIFIRSPRTLFALEHQRNEMIPHIVTLLQKRVRGWIVRRNFKKMKAAITIVRAYKAYKLRSYVQELANRLRKAKQMRDYGKSIQWPQPPLAGRKVEAKLHRMFDFWRANMILHKYPRSEWPQLRLQIIAATALAGRRPYWGQARRWVGDYLANSQENSGYEAYNGSIKNIRNHPADGETFQQVLFSSFVKKFNHFNKQANRAFIVSDSTIHKLDGIKNKFKDMKRTIKIRELTSISVSPGRDQLIVFHSSKNKDLVFSLESEYTPLKEDRIGEVVGIVCKKYHDLTGTELRVNVTTNISCRLDGKARIITVEAASNVEVPNFRPKEGNIIFEVPAAYCV.

A Myosin motor domain is found at 7–690 (AGVQDFVLLD…TLFALEHQRN (684 aa)). 100–107 (GESGAGKT) contacts ATP. The interval 567 to 589 (MADLVVTLLKKEPFYVRCIKPND) is actin-binding. 2 IQ domains span residues 694–714 (PHIVTLLQKRVRGWIVRRNFK) and 716–736 (MKAAITIVRAYKAYKLRSYVQ). The 202-residue stretch at 806 to 1007 (AGRRPYWGQA…EGNIIFEVPA (202 aa)) folds into the TH1 domain.

This sequence belongs to the TRAFAC class myosin-kinesin ATPase superfamily. Myosin family. Binds to F-actin. Interacts with arm. Interacts with shg. Interacts with ds (via intracellular region). In the embryo, expressed in gastric caeca, midgut cells of the proventriculus, and in the mid and hindgut. In the larval gut brush border, expression is in the terminal web domain. In the adult gut brush border, expression remains in the web domain and has also moved into the microvilli. Also expressed at low levels in follicle cells during oogenesis.

The protein resides in the cytoplasm. It localises to the cell cortex. Its subcellular location is the cytoskeleton. It is found in the cell membrane. The protein localises to the cell junction. The protein resides in the adherens junction. It localises to the cell projection. Unconventional myosin that functions as actin-based motor protein with ATPase activity. Binds to membranes enriched in phosphatidylinositol 4-5-bisphosphate, and can glide along actin filaments when anchored to a lipid bilayer. Generates left-right asymmetry at the level of single cells, organs and the whole body via its interaction with the actin cytoskeleton, both in the embryo and the adult. Normal left-right asymmetry of the larval midgut and hindgut requires expression in the embryonic hindgut epithelium during a critical time period, 10 to 12.75 hours after egg laying. This period corresponds to a late stage of germband retraction, and precedes left-right asymmetric morphogenesis. Expression in segment H1 of the imaginal ring is required at 0 to 24 hours after pupation for changes of cell shape and orientation in the H2 segment, which then gives rise to normal, dextral looping of the adult hindgut. Required during a critical period, 126-132 hours after egg laying, for normal, dextral rotation of the adult male genitalia. Has a double role by promoting dextral rotation in the posterior compartment of segment A8 of the male genital disk, and in repressing sinistral looping in the anterior compartment. The protein is Unconventional myosin ID of Drosophila melanogaster (Fruit fly).